Here is a 450-residue protein sequence, read N- to C-terminus: NADP-specific glutamate dehydrogenase (450 aa).

Lysine 114 is a catalytic residue.

It belongs to the Glu/Leu/Phe/Val dehydrogenases family. Homohexamer.

It carries out the reaction L-glutamate + NADP(+) + H2O = 2-oxoglutarate + NH4(+) + NADPH + H(+). This chain is NADP-specific glutamate dehydrogenase (gdhA), found in Botryotinia fuckeliana (Noble rot fungus).